The primary structure comprises 300 residues: Putative S-adenosyl-L-methionine-dependent methyltransferase Mkms_0379 (300 aa).

Residues Asp-128 and 157–158 contribute to the S-adenosyl-L-methionine site; that span reads DL.

Belongs to the UPF0677 family.

Exhibits S-adenosyl-L-methionine-dependent methyltransferase activity. The polypeptide is Putative S-adenosyl-L-methionine-dependent methyltransferase Mkms_0379 (Mycobacterium sp. (strain KMS)).